The chain runs to 343 residues: T-cell immunoglobulin and mucin domain-containing protein 4 (343 aa).

An N-terminal signal peptide occupies residues 1–22; that stretch reads MSKGLLLLWLVTELWWLYLTPA. Residues 23-128 enclose the Ig-like V-type domain; that stretch reads ASEDTIIGFL…WFNDVKKNVR (106 aa). Residues 23 to 279 lie on the Extracellular side of the membrane; sequence ASEDTIIGFL…KSHQINSRQT (257 aa). 3 cysteine pairs are disulfide-bonded: C40/C112, C53/C64, and C59/C111. N220 is a glycosylation site (N-linked (GlcNAc...) asparagine). The interval 239–258 is disordered; the sequence is TGSNPGILPSTSQLTTQKTT. Over residues 248–258 the composition is skewed to low complexity; the sequence is STSQLTTQKTT. Residues 280-300 form a helical membrane-spanning segment; it reads ILIIACCVGFVLMVLLFLAFL. The Cytoplasmic portion of the chain corresponds to 301-343; it reads LRGKVTGANCLQRHKRPDNTEDSDSVLNDMSHGRDDEDGIFTL. The tract at residues 313–343 is disordered; sequence RHKRPDNTEDSDSVLNDMSHGRDDEDGIFTL. S323, S325, and S331 each carry phosphoserine.

Belongs to the immunoglobulin superfamily. TIM family. Homodimer. As to expression, predominantly expressed in lymphoid tissues, such as spleen, lymph nodes, and Peyer patches. Also expressed in fetal liver, salivary gland, and spleen stromal cells, predominantly in the marginal zone and to a lesser extent throughout the white pulp. Not expressed in bone marrow-derived cells. Expressed mainly by antigen presenting cells (APCs) in T- and B-cell areas, but not by T- or B-lymphocytes.

It localises to the membrane. Functionally, phosphatidylserine receptor that plays different role in immune response including phagocytosis of apoptotic cells and T-cell regulation. Controls T-cell activation in a bimodal fashion, decreasing the activation of naive T-cells by inducing cell cycle arrest, while increasing proliferation of activated T-cells by activating AKT1 and ERK1/2 phosphorylations and subsequent signaling pathways. Also plays a role in efferocytosis which is the process by which apoptotic cells are removed by phagocytic cells. Mechanistically, promotes the engulfment of apoptotic cells or exogenous particles by securing them to phagocytes through direct binding to phosphatidylserine present on apoptotic cells, while other engulfment receptors such as MERTK efficiently recognize apoptotic cells and mediate their ingestion. Additionally, promotes autophagy process by suppressing NLRP3 inflammasome activity via activation of STK11/PRKAA1 pathway in a phosphatidylserine-dependent mechanism. This is T-cell immunoglobulin and mucin domain-containing protein 4 (Timd4) from Mus musculus (Mouse).